The chain runs to 30 residues: Ribonuclease pancreatic (30 aa).

A compositionally biased stretch (basic and acidic residues) spans 1–13 (KETAAAKFERQHM). The disordered stretch occupies residues 1–21 (KETAAAKFERQHMDPAPAAAX). Substrate contacts are provided by K7 and R10. The active-site Proton acceptor is H12.

It belongs to the pancreatic ribonuclease family. Monomer. Interacts with and forms tight 1:1 complexes with RNH1. Dimerization of two such complexes may occur. Interaction with RNH1 inhibits this protein. Pancreas.

The protein localises to the secreted. It carries out the reaction an [RNA] containing cytidine + H2O = an [RNA]-3'-cytidine-3'-phosphate + a 5'-hydroxy-ribonucleotide-3'-[RNA].. It catalyses the reaction an [RNA] containing uridine + H2O = an [RNA]-3'-uridine-3'-phosphate + a 5'-hydroxy-ribonucleotide-3'-[RNA].. Endonuclease that catalyzes the cleavage of RNA on the 3' side of pyrimidine nucleotides. Acts on single-stranded and double-stranded RNA. This chain is Ribonuclease pancreatic (RNASE1), found in Odocoileus virginianus virginianus (Virginia white-tailed deer).